Reading from the N-terminus, the 512-residue chain is Maturase K (512 aa).

It belongs to the intron maturase 2 family. MatK subfamily.

Its subcellular location is the plastid. It is found in the chloroplast. Usually encoded in the trnK tRNA gene intron. Probably assists in splicing its own and other chloroplast group II introns. The protein is Maturase K of Zantedeschia aethiopica (White calla lily).